The chain runs to 233 residues: Lysine exporter LysE (233 aa).

At 1 to 2 the chain is on the cytoplasmic side; sequence ME. The helical transmembrane segment at 3–23 threads the bilayer; that stretch reads IFITGLLLGASLLLSIGPQNV. The Periplasmic segment spans residues 24-65; it reads LVIKQGIKREGLIAVLLVCLISDVFLFIAGTLGVDLLSNAAP. The helical transmembrane segment at 66-86 threads the bilayer; that stretch reads IVLDIMRWGGIAYLLWFAVMA. Residues 87–143 are Cytoplasmic-facing; it reads AKDAMTNKVEAPQIIEETEPTVPDDTPLGGSAVATDTRNRVRVEVSVDKQRVWVKPM. The helical transmembrane segment at 144–164 threads the bilayer; sequence LMAIVLTWLNPNAYLDAFVFI. At 165–176 the chain is on the periplasmic side; that stretch reads GGVGAQYGDTGR. A helical transmembrane segment spans residues 177–197; it reads WIFAAGAFAASLIWFPLVGFG. Topologically, residues 198-212 are cytoplasmic; it reads AAALSRPLSSPKVWR. Residues 213-233 traverse the membrane as a helical segment; it reads WINVVVAVVMTALAIKLMLMG.

The protein belongs to the LysE/ArgO transporter (TC 2.A.75) family.

It is found in the cell inner membrane. Its activity is regulated as follows. Transport process is modulated by three forces: the membrane potential, the chemical potential of lysine, and the proton gradient. Strongly inhibited by CCCP and valinomycin. Its function is as follows. Catalyzes the efflux of L-lysine. Can also export L-arginine and L-citrulline. The lysEG system prevents bacteriostasis due to elevated L-lysine or L-arginine concentrations that arise during growth in the presence of peptides or in mutants possessing a deregulated biosynthesis pathway. In vitro, can also export D-lysine during biotechnological production of D-amino acids. This chain is Lysine exporter LysE, found in Corynebacterium glutamicum (strain ATCC 13032 / DSM 20300 / JCM 1318 / BCRC 11384 / CCUG 27702 / LMG 3730 / NBRC 12168 / NCIMB 10025 / NRRL B-2784 / 534).